Here is a 188-residue protein sequence, read N- to C-terminus: Ribosome maturation factor RimM (188 aa).

Residues 103–177 (EEGWYYADLI…RVVIDPPAGT (75 aa)) form the PRC barrel domain.

It belongs to the RimM family. Binds ribosomal protein uS19.

Its subcellular location is the cytoplasm. Functionally, an accessory protein needed during the final step in the assembly of 30S ribosomal subunit, possibly for assembly of the head region. Essential for efficient processing of 16S rRNA. May be needed both before and after RbfA during the maturation of 16S rRNA. It has affinity for free ribosomal 30S subunits but not for 70S ribosomes. This is Ribosome maturation factor RimM from Parvibaculum lavamentivorans (strain DS-1 / DSM 13023 / NCIMB 13966).